Consider the following 198-residue polypeptide: NAD(P)H dehydrogenase (quinone) (198 aa).

The region spanning 4–190 is the Flavodoxin-like domain; the sequence is ILVLYYSMYG…ILASFQGAHV (187 aa). FMN is bound by residues 10 to 15 and 79 to 81; these read SMYGHI and TRF. Residue tyrosine 12 coordinates NAD(+). Tryptophan 99 is a substrate binding site. FMN contacts are provided by residues 114–119 and histidine 134; that span reads STGTGG.

It belongs to the WrbA family. FMN is required as a cofactor.

The enzyme catalyses a quinone + NADH + H(+) = a quinol + NAD(+). It carries out the reaction a quinone + NADPH + H(+) = a quinol + NADP(+). The polypeptide is NAD(P)H dehydrogenase (quinone) (Azotobacter vinelandii (strain DJ / ATCC BAA-1303)).